Reading from the N-terminus, the 61-residue chain is Small ribosomal subunit protein eS31 (61 aa).

4 residues coordinate Zn(2+): Cys-22, Cys-25, Cys-38, and Cys-41. The C4-type zinc-finger motif lies at 22-41; it reads CPRCGSFMAEHKDRYHCGKC.

It belongs to the eukaryotic ribosomal protein eS31 family. In terms of assembly, part of the 30S ribosomal subunit. Zn(2+) serves as cofactor.

The polypeptide is Small ribosomal subunit protein eS31 (Nanoarchaeum equitans (strain Kin4-M)).